Here is a 448-residue protein sequence, read N- to C-terminus: Chromosomal replication initiator protein DnaA (448 aa).

Residues 1-73 (MSTHLTETWE…VNALKLLTSK (73 aa)) form a domain I, interacts with DnaA modulators region. The segment at 73-109 (KKYNIDFIVTTEEKIEENEKNHNNEKSNIVVNDEMST) is domain II. The interval 110-326 (MLNPKYTFDS…GALIRIVAFS (217 aa)) is domain III, AAA+ region. Residues Gly-154, Gly-156, Lys-157, and Thr-158 each coordinate ATP. Residues 327–448 (SLTNKEISVD…NELNKRINQK (122 aa)) form a domain IV, binds dsDNA region.

It belongs to the DnaA family. As to quaternary structure, oligomerizes as a right-handed, spiral filament on DNA at oriC.

It localises to the cytoplasm. In terms of biological role, plays an essential role in the initiation and regulation of chromosomal replication. ATP-DnaA binds to the origin of replication (oriC) to initiate formation of the DNA replication initiation complex once per cell cycle. Binds the DnaA box (a 9 base pair repeat at the origin) and separates the double-stranded (ds)DNA. Forms a right-handed helical filament on oriC DNA; dsDNA binds to the exterior of the filament while single-stranded (ss)DNA is stabiized in the filament's interior. The ATP-DnaA-oriC complex binds and stabilizes one strand of the AT-rich DNA unwinding element (DUE), permitting loading of DNA polymerase. After initiation quickly degrades to an ADP-DnaA complex that is not apt for DNA replication. Binds acidic phospholipids. The chain is Chromosomal replication initiator protein DnaA from Clostridium botulinum (strain 657 / Type Ba4).